The primary structure comprises 484 residues: Muscarinic acetylcholine receptor M4 (484 aa).

At 1–32 (MENDTWENESSASNHSIDETIVEIPGKYQTME) the chain is on the extracellular side. N-linked (GlcNAc...) asparagine glycans are attached at residues Asn3, Asn8, and Asn14. Residues 33–55 (MIFIATVTGSLSLVTVVGNILVM) traverse the membrane as a helical segment. Over 56–69 (LSIKVNRQLQTVNN) the chain is Cytoplasmic. Residues 70-90 (YFLFSLACADLIIGVFSMNLY) traverse the membrane as a helical segment. At 91–107 (SLYIIKGYWPLGPIVCD) the chain is on the extracellular side. Cys106 and Cys186 are oxidised to a cystine. The chain crosses the membrane as a helical span at residues 108 to 129 (LWLALDYVVSNASVMNLLIISL). The Cytoplasmic portion of the chain corresponds to 130-149 (ERXFCVTKPLTYPARRTTKM). The chain crosses the membrane as a helical span at residues 150–172 (AGLMIAAAWLLSFELWAPAILFW). The Extracellular portion of the chain corresponds to 173 to 194 (QFIVGQRTVPSGECYIQFLSNP). Residues 195–217 (AVTFGTAIAAFYLPVVIMTILYI) form a helical membrane-spanning segment. Topologically, residues 218–406 (HISLASRSRV…AAREKKVTRT (189 aa)) are cytoplasmic. Residues 255–316 (NIPKQDAGDK…EKQPLSEASS (62 aa)) form a disordered region. Residues 260–270 (DAGDKVVEKKN) are compositionally biased toward basic and acidic residues. A helical membrane pass occupies residues 407-427 (IFAILLAFIITWTPYNVMVLI). The Extracellular segment spans residues 428-441 (NTFCQTCIPETIWY). A helical membrane pass occupies residues 442–461 (IGYWLCYVNSTINPACYALC). Residues 462 to 484 (NATFKKTFKHLLMCQYKSIGTAR) are Cytoplasmic-facing.

This sequence belongs to the G-protein coupled receptor 1 family. Muscarinic acetylcholine receptor subfamily. CHRM4 sub-subfamily.

The protein resides in the cell membrane. Its subcellular location is the postsynaptic cell membrane. The muscarinic acetylcholine receptor mediates various cellular responses, including inhibition of adenylate cyclase, breakdown of phosphoinositides and modulation of potassium channels through the action of G proteins. Primary transducing effect is inhibition of adenylate cyclase. The protein is Muscarinic acetylcholine receptor M4 (chrm4) of Xenopus laevis (African clawed frog).